The sequence spans 758 residues: 5-methyltetrahydropteroyltriglutamate--homocysteine methyltransferase (758 aa).

5-methyltetrahydropteroyltri-L-glutamate is bound by residues 17–20 (RELK) and Lys117. L-homocysteine contacts are provided by residues 434-436 (IGS) and Glu487. L-methionine-binding positions include 434-436 (IGS) and Glu487. 5-methyltetrahydropteroyltri-L-glutamate is bound by residues 518–519 (RC) and Trp564. Asp602 is an L-homocysteine binding site. Asp602 provides a ligand contact to L-methionine. Glu608 provides a ligand contact to 5-methyltetrahydropteroyltri-L-glutamate. Residues His644, Cys646, and Glu668 each coordinate Zn(2+). Catalysis depends on His697, which acts as the Proton donor. Zn(2+) is bound at residue Cys729.

This sequence belongs to the vitamin-B12 independent methionine synthase family. The cofactor is Zn(2+).

It catalyses the reaction 5-methyltetrahydropteroyltri-L-glutamate + L-homocysteine = tetrahydropteroyltri-L-glutamate + L-methionine. Its pathway is amino-acid biosynthesis; L-methionine biosynthesis via de novo pathway; L-methionine from L-homocysteine (MetE route): step 1/1. In terms of biological role, catalyzes the transfer of a methyl group from 5-methyltetrahydrofolate to homocysteine resulting in methionine formation. In Yersinia pseudotuberculosis serotype O:1b (strain IP 31758), this protein is 5-methyltetrahydropteroyltriglutamate--homocysteine methyltransferase.